Reading from the N-terminus, the 370-residue chain is NADH-quinone oxidoreductase subunit D (370 aa).

This sequence belongs to the complex I 49 kDa subunit family. As to quaternary structure, NDH-1 is composed of 14 different subunits. Subunits NuoB, C, D, E, F, and G constitute the peripheral sector of the complex.

The protein localises to the cell membrane. It carries out the reaction a quinone + NADH + 5 H(+)(in) = a quinol + NAD(+) + 4 H(+)(out). In terms of biological role, NDH-1 shuttles electrons from NADH, via FMN and iron-sulfur (Fe-S) centers, to quinones in the respiratory chain. The immediate electron acceptor for the enzyme in this species is believed to be a menaquinone. Couples the redox reaction to proton translocation (for every two electrons transferred, four hydrogen ions are translocated across the cytoplasmic membrane), and thus conserves the redox energy in a proton gradient. This Clostridium beijerinckii (strain ATCC 51743 / NCIMB 8052) (Clostridium acetobutylicum) protein is NADH-quinone oxidoreductase subunit D.